The sequence spans 529 residues: Transcription factor kayak (529 aa).

The span at 118–134 shows a compositional bias: polar residues; that stretch reads LQGTDSDNSNASWADAQ. 2 disordered regions span residues 118-166 and 180-239; these read LQGT…SVNG and NAGR…CRKR. 2 stretches are compositionally biased toward low complexity: residues 142–153 and 182–201; these read TDTSSAHTDSTS and GRGSTQGSNTNTSNSATPAR. The bZIP domain occupies 219–282; it reads EEKRRIRRER…NQLEFFLRAH (64 aa). The tract at residues 221–240 is basic motif; that stretch reads KRRIRRERNKQAAARCRKRR. The interval 247–275 is leucine-zipper; it reads LTYEVEQLEKKRDGLKKEMETLTDVKNQL. Disordered stretches follow at residues 311-390 and 493-529; these read AGSC…PMST and DGGTGLTPVSGPLVPSQNKHPLELPTPTAEPSKLVSL. The span at 315 to 332 shows a compositional bias: low complexity; it reads DSGSSSHHNNNSNDSSNG. A compositionally biased stretch (polar residues) spans 340 to 350; sequence SLNSTGRSNSP. The residue at position 349 (Ser349) is a Phosphoserine. Over residues 363–375 the composition is skewed to low complexity; the sequence is DGGLDSSCLLDQD. A compositionally biased stretch (pro residues) spans 376–387; that stretch reads GPPPSKRFPLPP.

The protein belongs to the bZIP family. Fos subfamily. As to quaternary structure, homodimer. Heterodimer with Jra. The kay-Jra heterodimer binds more stably to the AP-1 site than either of the two proteins alone.

It is found in the nucleus. Its function is as follows. Developmentally regulated transcription factor AP-1 binds and recognizes the enhancer DNA sequence: 5'-TGA[CG]TCA-3'. May play a role in the function or determination of a particular subset of cells in the developing embryo. Is able to carry out its function either independently of or in conjunction with Jra. This Drosophila ananassae (Fruit fly) protein is Transcription factor kayak.